The chain runs to 95 residues: Small ribosomal subunit protein bS6 (95 aa).

The protein belongs to the bacterial ribosomal protein bS6 family.

Functionally, binds together with bS18 to 16S ribosomal RNA. This chain is Small ribosomal subunit protein bS6, found in Streptococcus agalactiae serotype Ia (strain ATCC 27591 / A909 / CDC SS700).